Consider the following 149-residue polypeptide: Nucleoside diphosphate kinase (149 aa).

ATP contacts are provided by lysine 9, phenylalanine 57, arginine 85, threonine 91, arginine 102, and asparagine 112. The Pros-phosphohistidine intermediate role is filled by histidine 115.

It belongs to the NDK family. In terms of assembly, homotetramer. Mg(2+) is required as a cofactor.

The protein localises to the cytoplasm. The enzyme catalyses a 2'-deoxyribonucleoside 5'-diphosphate + ATP = a 2'-deoxyribonucleoside 5'-triphosphate + ADP. It carries out the reaction a ribonucleoside 5'-diphosphate + ATP = a ribonucleoside 5'-triphosphate + ADP. Major role in the synthesis of nucleoside triphosphates other than ATP. The ATP gamma phosphate is transferred to the NDP beta phosphate via a ping-pong mechanism, using a phosphorylated active-site intermediate. This is Nucleoside diphosphate kinase from Desulfitobacterium hafniense (strain Y51).